The sequence spans 179 residues: Large ribosomal subunit protein uL6 (179 aa).

Belongs to the universal ribosomal protein uL6 family. In terms of assembly, part of the 50S ribosomal subunit.

Its function is as follows. This protein binds to the 23S rRNA, and is important in its secondary structure. It is located near the subunit interface in the base of the L7/L12 stalk, and near the tRNA binding site of the peptidyltransferase center. The protein is Large ribosomal subunit protein uL6 of Clostridium acetobutylicum (strain ATCC 824 / DSM 792 / JCM 1419 / IAM 19013 / LMG 5710 / NBRC 13948 / NRRL B-527 / VKM B-1787 / 2291 / W).